We begin with the raw amino-acid sequence, 167 residues long: Lipoprotein signal peptidase (167 aa).

The next 3 membrane-spanning stretches (helical) occupy residues 10 to 30, 68 to 88, and 98 to 118; these read LIWL…KAWV, WQLW…AFWL, and SAVP…DRLM. Catalysis depends on residues Asp-124 and Asp-142. A helical transmembrane segment spans residues 138-158; the sequence is FNIADSAIVGGAIGIALFGLF.

This sequence belongs to the peptidase A8 family.

Its subcellular location is the cell inner membrane. It carries out the reaction Release of signal peptides from bacterial membrane prolipoproteins. Hydrolyzes -Xaa-Yaa-Zaa-|-(S,diacylglyceryl)Cys-, in which Xaa is hydrophobic (preferably Leu), and Yaa (Ala or Ser) and Zaa (Gly or Ala) have small, neutral side chains.. Its pathway is protein modification; lipoprotein biosynthesis (signal peptide cleavage). Functionally, this protein specifically catalyzes the removal of signal peptides from prolipoproteins. The chain is Lipoprotein signal peptidase from Xanthomonas campestris pv. campestris (strain 8004).